Reading from the N-terminus, the 471-residue chain is 3-isopropylmalate dehydratase large subunit (471 aa).

Positions 349, 410, and 413 each coordinate [4Fe-4S] cluster.

It belongs to the aconitase/IPM isomerase family. LeuC type 1 subfamily. In terms of assembly, heterodimer of LeuC and LeuD. The cofactor is [4Fe-4S] cluster.

The catalysed reaction is (2R,3S)-3-isopropylmalate = (2S)-2-isopropylmalate. The protein operates within amino-acid biosynthesis; L-leucine biosynthesis; L-leucine from 3-methyl-2-oxobutanoate: step 2/4. Its function is as follows. Catalyzes the isomerization between 2-isopropylmalate and 3-isopropylmalate, via the formation of 2-isopropylmaleate. This Chromobacterium violaceum (strain ATCC 12472 / DSM 30191 / JCM 1249 / CCUG 213 / NBRC 12614 / NCIMB 9131 / NCTC 9757 / MK) protein is 3-isopropylmalate dehydratase large subunit.